Consider the following 406-residue polypeptide: Succinylornithine transaminase (406 aa).

Lys-252 is subject to N6-(pyridoxal phosphate)lysine.

This sequence belongs to the class-III pyridoxal-phosphate-dependent aminotransferase family. AstC subfamily. Pyridoxal 5'-phosphate is required as a cofactor.

It catalyses the reaction N(2)-succinyl-L-ornithine + 2-oxoglutarate = N-succinyl-L-glutamate 5-semialdehyde + L-glutamate. It participates in amino-acid degradation; L-arginine degradation via AST pathway; L-glutamate and succinate from L-arginine: step 3/5. In terms of biological role, catalyzes the transamination of N(2)-succinylornithine and alpha-ketoglutarate into N(2)-succinylglutamate semialdehyde and glutamate. Can also act as an acetylornithine aminotransferase. This chain is Succinylornithine transaminase, found in Citrobacter koseri (strain ATCC BAA-895 / CDC 4225-83 / SGSC4696).